Here is a 211-residue protein sequence, read N- to C-terminus: Thiamine-phosphate synthase (211 aa).

4-amino-2-methyl-5-(diphosphooxymethyl)pyrimidine-binding positions include 37 to 41 (QLRIK) and N69. D70 and D89 together coordinate Mg(2+). Position 108 (S108) interacts with 4-amino-2-methyl-5-(diphosphooxymethyl)pyrimidine. 134-136 (TQT) is a binding site for 2-[(2R,5Z)-2-carboxy-4-methylthiazol-5(2H)-ylidene]ethyl phosphate. K137 is a 4-amino-2-methyl-5-(diphosphooxymethyl)pyrimidine binding site. 2-[(2R,5Z)-2-carboxy-4-methylthiazol-5(2H)-ylidene]ethyl phosphate contacts are provided by residues G166 and 186–187 (VS).

This sequence belongs to the thiamine-phosphate synthase family. Requires Mg(2+) as cofactor.

It catalyses the reaction 2-[(2R,5Z)-2-carboxy-4-methylthiazol-5(2H)-ylidene]ethyl phosphate + 4-amino-2-methyl-5-(diphosphooxymethyl)pyrimidine + 2 H(+) = thiamine phosphate + CO2 + diphosphate. The enzyme catalyses 2-(2-carboxy-4-methylthiazol-5-yl)ethyl phosphate + 4-amino-2-methyl-5-(diphosphooxymethyl)pyrimidine + 2 H(+) = thiamine phosphate + CO2 + diphosphate. It carries out the reaction 4-methyl-5-(2-phosphooxyethyl)-thiazole + 4-amino-2-methyl-5-(diphosphooxymethyl)pyrimidine + H(+) = thiamine phosphate + diphosphate. It functions in the pathway cofactor biosynthesis; thiamine diphosphate biosynthesis; thiamine phosphate from 4-amino-2-methyl-5-diphosphomethylpyrimidine and 4-methyl-5-(2-phosphoethyl)-thiazole: step 1/1. Its function is as follows. Condenses 4-methyl-5-(beta-hydroxyethyl)thiazole monophosphate (THZ-P) and 2-methyl-4-amino-5-hydroxymethyl pyrimidine pyrophosphate (HMP-PP) to form thiamine monophosphate (TMP). This Citrobacter koseri (strain ATCC BAA-895 / CDC 4225-83 / SGSC4696) protein is Thiamine-phosphate synthase.